The primary structure comprises 319 residues: Mas-related G-protein coupled receptor member D (319 aa).

Over 1–30 (MNYTPYSSPAPGLTISPTMDPVTWVYFSVT) the chain is Extracellular. A helical transmembrane segment spans residues 31 to 51 (FLAMATCVCGIVGNSMVIWLL). Residues 52–64 (SFHRVQRSPFCTY) lie on the Cytoplasmic side of the membrane. The helical transmembrane segment at 65–85 (VLNLAVADLLFLLCMASLLSL) threads the bilayer. Residues 86 to 92 (ETGPLLT) lie on the Extracellular side of the membrane. The helical transmembrane segment at 93 to 113 (ASTSARVYEGMKRIKYFAYTA) threads the bilayer. At 114 to 144 (GLSLLTAISTQRCLSVLFPIWYKCHRPQHLS) the chain is on the cytoplasmic side. The helical transmembrane segment at 145–165 (GVVCGVLWALALLMNFLASFF) threads the bilayer. At 166 to 184 (CVQFWHPDKYQCFKVDMVF) the chain is on the extracellular side. Residues 185–205 (NSLILGIFMPVMVLTSAIIFI) form a helical membrane-spanning segment. Residues 206–220 (RMRKNSLLQRRQPRR) are Cytoplasmic-facing. Residues 221 to 241 (LYVVILTSVLVFLTCSLPLGI) form a helical membrane-spanning segment. Topologically, residues 242 to 260 (NWFLLYWVELPQAVRLLYV) are extracellular. The helical transmembrane segment at 261-281 (CSSRFSSSLSSSANPVIYFLV) threads the bilayer. Over 282–319 (GSQKSHRLQESLGAVLGRALQDEPEGRETPSTCTNDGV) the chain is Cytoplasmic.

Belongs to the G-protein coupled receptor 1 family. Mas subfamily. Co-expressed in the small diameter neurons with P2X3 and VR1 in dorsal root ganglia.

The protein resides in the cell membrane. Its function is as follows. May regulate nociceptor function and/or development, including the sensation or modulation of pain. Functions as a specific membrane receptor for beta-alanine. The receptor couples with G-protein G(q) and G(i). This chain is Mas-related G-protein coupled receptor member D (Mrgprd), found in Rattus norvegicus (Rat).